A 66-amino-acid chain; its full sequence is Large ribosomal subunit protein bL35 (66 aa).

The protein belongs to the bacterial ribosomal protein bL35 family.

This is Large ribosomal subunit protein bL35 from Hyphomonas neptunium (strain ATCC 15444).